The chain runs to 264 residues: 3-methyl-2-oxobutanoate hydroxymethyltransferase (264 aa).

Mg(2+)-binding residues include aspartate 45 and aspartate 84. 3-methyl-2-oxobutanoate contacts are provided by residues 45 to 46, aspartate 84, and lysine 112; that span reads DS. Glutamate 114 is a binding site for Mg(2+). Catalysis depends on glutamate 181, which acts as the Proton acceptor.

Belongs to the PanB family. Homodecamer; pentamer of dimers. Mg(2+) serves as cofactor.

Its subcellular location is the cytoplasm. The catalysed reaction is 3-methyl-2-oxobutanoate + (6R)-5,10-methylene-5,6,7,8-tetrahydrofolate + H2O = 2-dehydropantoate + (6S)-5,6,7,8-tetrahydrofolate. The protein operates within cofactor biosynthesis; (R)-pantothenate biosynthesis; (R)-pantoate from 3-methyl-2-oxobutanoate: step 1/2. Catalyzes the reversible reaction in which hydroxymethyl group from 5,10-methylenetetrahydrofolate is transferred onto alpha-ketoisovalerate to form ketopantoate. The protein is 3-methyl-2-oxobutanoate hydroxymethyltransferase of Shewanella sp. (strain MR-7).